The chain runs to 925 residues: Probable glycoprotein hormone G-protein coupled receptor (925 aa).

The first 27 residues, 1 to 27, serve as a signal peptide directing secretion; sequence MEDRGICPRVLQVLFLVVLILISPVYA. The Extracellular segment spans residues 28–529; it reads AKNDACTKCS…EDIMGYVWLT (502 aa). Asn61 carries an N-linked (GlcNAc...) asparagine glycan. LRR repeat units lie at residues 85–106, 110–131, 134–155, 156–180, 181–202, 203–224, 230–250, and 251–273; these read KLKY…RVKN, SLIT…AFDD, QLTQ…NKTS, SVTK…GNLP, SLEN…IFRQ, NTRL…NEDA, SLKT…RGLK, and NLHF…DSIR. The N-linked (GlcNAc...) asparagine glycan is linked to Asn152. N-linked (GlcNAc...) asparagine glycosylation occurs at Asn212. The tract at residues 299 to 493 is disordered; it reads TMQKPSTEEN…PTLIPHSNHT (195 aa). Over residues 301 to 318 the composition is skewed to polar residues; the sequence is QKPSTEENNGQTTASSPT. The 1; truncated repeat unit spans residues 333-349; the sequence is STQPHTTSGFGGGGFPG. Residues 333–461 are 5 X approximate tandem repeats; that stretch reads STQPHTTSGF…PGGGGFPGGG (129 aa). Gly residues predominate over residues 341 to 362; that stretch reads GFGGGGFPGGGGGFPGGGGFPA. A run of 3 repeats spans residues 350–384, 385–419, and 420–453. The span at 365–375 shows a compositional bias: polar residues; that stretch reads SKTSTQPHTTS. The span at 376–397 shows a compositional bias: gly residues; the sequence is GFGGGGFPGGGGGFPGGGGFPA. The segment covering 400–410 has biased composition (polar residues); the sequence is SKTSTQPHTTS. The span at 411–432 shows a compositional bias: gly residues; that stretch reads GFGGGGFPGGGGGFPGGGGFPG. A compositionally biased stretch (polar residues) spans 434–445; the sequence is SNTSTQPHTTSN. Asn435 is a glycosylation site (N-linked (GlcNAc...) asparagine). A compositionally biased stretch (gly residues) spans 446–462; that stretch reads SGGGGFPGGGGFPGGGT. The stretch at 454-461 is one 5; truncated repeat; sequence GGGFPGGG. Positions 476–493 are enriched in polar residues; sequence VHQSTADPPTLIPHSNHT. N-linked (GlcNAc...) asparagine glycosylation occurs at Asn495. A helical transmembrane segment spans residues 530 to 551; the sequence is VVSFMVGAVALVANLVVALVLL. At 552–561 the chain is on the cytoplasmic side; that stretch reads TSQRRLNVTR. The chain crosses the membrane as a helical span at residues 562–584; sequence FLMCNLAFADFILGLYIFILTSV. The Extracellular segment spans residues 585–606; it reads SAVTRGDYHNYVQQWQNGAGCK. Residues 607–628 traverse the membrane as a helical segment; the sequence is ILGFLAVFSSELSLFTLVMMTI. At 629-651 the chain is on the cytoplasmic side; sequence ERFYAIVHAMHMNARLSFRKTVR. Residues 652–673 form a helical membrane-spanning segment; that stretch reads FMIGGWIFALVMAVVPLTGVSG. Over 674 to 691 the chain is Extracellular; that stretch reads YSKVAICLPFDVSDATST. A helical membrane pass occupies residues 692-712; the sequence is AYVAFLLLVNGASFISVMYLY. Residues 713–739 are Cytoplasmic-facing; it reads SRMLYVVVSGGDMEGAPKRNDSKVAKR. The helical transmembrane segment at 740-763 threads the bilayer; that stretch reads MAILVFTDMLCWAPIAFFGLLAAF. Residues 764–774 lie on the Extracellular side of the membrane; that stretch reads GQTLLTVTQSK. Residues 775-795 traverse the membrane as a helical segment; that stretch reads ILLVFFFPINSICNPFLYAFF. Over 796 to 925 the chain is Cytoplasmic; that stretch reads TKAFKRELFT…QKQKILQSPS (130 aa). The interval 904–925 is disordered; it reads VTKSSSPPHLKLQKQKILQSPS.

The protein belongs to the G-protein coupled receptor 1 family. FSH/LSH/TSH subfamily.

It is found in the cell membrane. Its function is as follows. Probable receptor for a glycoprotein hormone. In Anthopleura elegantissima (Green aggregating anemone), this protein is Probable glycoprotein hormone G-protein coupled receptor.